An 860-amino-acid chain; its full sequence is Probable leucine--tRNA ligase, cytoplasmic (860 aa).

A 'HIGH' region motif is present at residues 41-51; the sequence is PYMNGKLHLGH. The short motif at 552–556 is the 'KMSKS' region element; the sequence is KMSKS. Lys-555 provides a ligand contact to ATP.

This sequence belongs to the class-I aminoacyl-tRNA synthetase family.

It localises to the cytoplasm. It carries out the reaction tRNA(Leu) + L-leucine + ATP = L-leucyl-tRNA(Leu) + AMP + diphosphate. This Enterocytozoon bieneusi (strain H348) (Microsporidian parasite) protein is Probable leucine--tRNA ligase, cytoplasmic.